We begin with the raw amino-acid sequence, 153 residues long: Superoxide dismutase [Cu-Zn] (153 aa).

Cu cation-binding residues include H45, H47, and H62. C56 and C145 are oxidised to a cystine. Residues H62, H70, H79, and D82 each contribute to the Zn(2+) site. H119 is a binding site for Cu cation.

Belongs to the Cu-Zn superoxide dismutase family. Homodimer. Requires Cu cation as cofactor. It depends on Zn(2+) as a cofactor.

The protein localises to the cytoplasm. The enzyme catalyses 2 superoxide + 2 H(+) = H2O2 + O2. Functionally, destroys radicals which are normally produced within the cells and which are toxic to biological systems. The chain is Superoxide dismutase [Cu-Zn] from Drosophila willistoni (Fruit fly).